Consider the following 187-residue polypeptide: Ribosome-recycling factor (187 aa).

It belongs to the RRF family.

The protein localises to the cytoplasm. In terms of biological role, responsible for the release of ribosomes from messenger RNA at the termination of protein biosynthesis. May increase the efficiency of translation by recycling ribosomes from one round of translation to another. The chain is Ribosome-recycling factor from Ruegeria sp. (strain TM1040) (Silicibacter sp.).